The primary structure comprises 72 residues: UPF0270 protein YheU (72 aa).

Belongs to the UPF0270 family.

The sequence is that of UPF0270 protein YheU from Salmonella agona (strain SL483).